A 200-amino-acid polypeptide reads, in one-letter code: Glycerol-3-phosphate acyltransferase (200 aa).

Transmembrane regions (helical) follow at residues phenylalanine 4–valine 24, tryptophan 53–glycine 73, glutamine 80–phenylalanine 100, isoleucine 115–valine 135, and glycine 138–phenylalanine 158.

This sequence belongs to the PlsY family. In terms of assembly, probably interacts with PlsX.

The protein localises to the cell inner membrane. It carries out the reaction an acyl phosphate + sn-glycerol 3-phosphate = a 1-acyl-sn-glycero-3-phosphate + phosphate. The protein operates within lipid metabolism; phospholipid metabolism. Functionally, catalyzes the transfer of an acyl group from acyl-phosphate (acyl-PO(4)) to glycerol-3-phosphate (G3P) to form lysophosphatidic acid (LPA). This enzyme utilizes acyl-phosphate as fatty acyl donor, but not acyl-CoA or acyl-ACP. In Actinobacillus succinogenes (strain ATCC 55618 / DSM 22257 / CCUG 43843 / 130Z), this protein is Glycerol-3-phosphate acyltransferase.